The sequence spans 256 residues: MSGNREQVFPTRMTLGLMKTKLKGANQGYSLLKRKSEALTKRFRDITKRIDDAKQKMGRVMQTAAFSLAEVSYATGENIGYQVQESVSTARFKVRARQENVSGVYLSQFESYIDPEINDFRLTGLGRGGQQVQRAKEIYSRAVETLVELASLQTAFIILDEVIKVTNRRVNAIEHVIIPRTENTIAYINSELDELDREEFYRLKKVQEKKQNETAKLDAEMKLKRDRAEQDASEVAADEEPQGETLVADQEDDVIF.

Basic and acidic residues predominate over residues 211–230; the sequence is QNETAKLDAEMKLKRDRAEQ. Positions 211-256 are disordered; sequence QNETAKLDAEMKLKRDRAEQDASEVAADEEPQGETLVADQEDDVIF.

Belongs to the V-ATPase D subunit family. As to quaternary structure, V-ATPase is a heteromultimeric enzyme composed of a peripheral catalytic V1 complex (components A to H) attached to an integral membrane V0 proton pore complex (components: a, c, c', c'', d, e, f and VOA1). Interacts with RAV1 and RAV2 components of the RAVE complex, which are essential for the stability and assembly of V-ATPase.

Its subcellular location is the vacuole membrane. Its function is as follows. Subunit of the V1 complex of vacuolar(H+)-ATPase (V-ATPase), a multisubunit enzyme composed of a peripheral complex (V1) that hydrolyzes ATP and a membrane integral complex (V0) that translocates protons. V-ATPase is responsible for acidifying and maintaining the pH of intracellular compartments. The sequence is that of V-type proton ATPase subunit D from Saccharomyces cerevisiae (strain ATCC 204508 / S288c) (Baker's yeast).